The sequence spans 498 residues: Hexokinase-1 (498 aa).

The helical transmembrane segment at 4 to 24 (VTVGAAVVGAAAVCAVAALIV) threads the bilayer. One can recognise a Hexokinase domain in the interval 35 to 488 (GRAMAILREF…SGIGAALLRA (454 aa)). A hexokinase small subdomain region spans residues 89-228 (QLVMKLGVFY…VLDMRVSALV (140 aa)). Residues G104, T105, and N106 each contribute to the ADP site. The D-glucose site is built by T194, K195, N229, and D230. The tract at residues 229 to 477 (NDTVGTLAGG…TSIVFVHSND (249 aa)) is hexokinase large subdomain. Residue T253 coordinates ADP. The D-glucose site is built by N256, E284, and E315. G442 provides a ligand contact to ADP.

It belongs to the hexokinase family. Expressed in young and mature leaves, stems, roots, stolons, and developing and mature tubers.

The protein localises to the plastid. The protein resides in the chloroplast outer membrane. The catalysed reaction is a D-hexose + ATP = a D-hexose 6-phosphate + ADP + H(+). It carries out the reaction D-fructose + ATP = D-fructose 6-phosphate + ADP + H(+). It catalyses the reaction D-glucose + ATP = D-glucose 6-phosphate + ADP + H(+). Its pathway is carbohydrate metabolism; hexose metabolism. It participates in carbohydrate degradation; glycolysis; D-glyceraldehyde 3-phosphate and glycerone phosphate from D-glucose: step 1/4. Functionally, fructose and glucose phosphorylating enzyme. May be involved in the phosphorylation of glucose during the export from plastids to cytosol. Seems neither to be involved in cell sugar sensing nor in carbohydrate metabolism in tuber. The polypeptide is Hexokinase-1 (HXK1) (Solanum tuberosum (Potato)).